The following is a 258-amino-acid chain: MAAAAAAAGDSDSWDADAFSVEDPVRKVGGGGTAGGDRWEGEDEDEDVKDNWDDDDDEKKEEAEVKPEVKISEKKKIAEKIKEKERQQKKRQEEIKKRLEEPEEPKVLTPEEQLADKLRLKKLQEESDLELAKETFGVNNAVYGIDAMNPSSRDDFTEFGKLLKDKITQYEKSLYYASFLEVLVRDVCISLEIDDLKKITNSLTVLCSEKQKQEKQSKAKKKKKGVVPGGGLKATMKDDLADYGGYDGGYVQDYEDFM.

The span at 1–11 (MAAAAAAAGDS) shows a compositional bias: low complexity. The disordered stretch occupies residues 1-108 (MAAAAAAAGD…LEEPEEPKVL (108 aa)). Ala2 carries the post-translational modification N-acetylalanine. Positions 2-69 (AAAAAAAGDS…KEEAEVKPEV (68 aa)) are sufficient for interaction with EIF3B. Phosphoserine is present on residues Ser11, Ser13, and Ser20. Over residues 40–59 (EGEDEDEDVKDNWDDDDDEK) the composition is skewed to acidic residues. Residues 60–106 (KEEAEVKPEVKISEKKKIAEKIKEKERQQKKRQEEIKKRLEEPEEPK) are compositionally biased toward basic and acidic residues. The stretch at 70–135 (KISEKKKIAE…ESDLELAKET (66 aa)) forms a coiled coil. Lys106 is covalently cross-linked (Glycyl lysine isopeptide (Lys-Gly) (interchain with G-Cter in SUMO2)). A Phosphothreonine modification is found at Thr109. Position 127 is a phosphoserine (Ser127). The segment at 217–238 (SKAKKKKKGVVPGGGLKATMKD) is disordered. Positions 243–258 (YGGYDGGYVQDYEDFM) are promotes stable association with the 40S ribosome. Position 254 is a phosphotyrosine (Tyr254).

In terms of assembly, component of the eukaryotic translation initiation factor 3 (eIF-3) complex, which is composed of 13 subunits: EIF3A, EIF3B, EIF3C, EIF3D, EIF3E, EIF3F, EIF3G, EIF3H, EIF3I, EIF3J, EIF3K, EIF3L and EIF3M. The eIF-3 complex appears to include 3 stable modules: module A is composed of EIF3A, EIF3B, EIF3G and EIF3I; module B is composed of EIF3F, EIF3H, and EIF3M; and module C is composed of EIF3C, EIF3D, EIF3E, EIF3K and EIF3L. EIF3C of module C binds EIF3B of module A and EIF3H of module B, thereby linking the three modules. EIF3J is a labile subunit that binds to the eIF-3 complex via EIF3B. The eIF-3 complex interacts with RPS6KB1 under conditions of nutrient depletion. Mitogenic stimulation leads to binding and activation of a complex composed of MTOR and RPTOR, leading to phosphorylation and release of RPS6KB1 and binding of EIF4B to eIF-3. Phosphorylated. Phosphorylation is enhanced upon serum stimulation.

The protein resides in the cytoplasm. Functionally, component of the eukaryotic translation initiation factor 3 (eIF-3) complex, which is required for several steps in the initiation of protein synthesis. The eIF-3 complex associates with the 40S ribosome and facilitates the recruitment of eIF-1, eIF-1A, eIF-2:GTP:methionyl-tRNAi and eIF-5 to form the 43S pre-initiation complex (43S PIC). The eIF-3 complex stimulates mRNA recruitment to the 43S PIC and scanning of the mRNA for AUG recognition. The eIF-3 complex is also required for disassembly and recycling of post-termination ribosomal complexes and subsequently prevents premature joining of the 40S and 60S ribosomal subunits prior to initiation. The eIF-3 complex specifically targets and initiates translation of a subset of mRNAs involved in cell proliferation, including cell cycling, differentiation and apoptosis, and uses different modes of RNA stem-loop binding to exert either translational activation or repression. The protein is Eukaryotic translation initiation factor 3 subunit J of Homo sapiens (Human).